A 242-amino-acid chain; its full sequence is MDIKLKDFEGPLDLLLHLVSKYQMDIYDVPITEVIEQYLAYVSTLQAMRLEVTGEYMVMASQLMLIKSRKLLPKVAEVTDLGDDLEQDLLSQIEEYRKFKLLGEHLEAKHQERAQYYSKAPTELIYEDAELVHDKTTIDLFLTFSNILAKKKEEFAQNHTTILRDEYKIEDMMIIVKESLIGRDQLRLQDLFKEAQNVQEVITLFLATLELIKTQELILVQEESFGDIYLMEKKEESQVPQS.

It belongs to the ScpA family. Component of a cohesin-like complex composed of ScpA, ScpB and the Smc homodimer, in which ScpA and ScpB bind to the head domain of Smc. The presence of the three proteins is required for the association of the complex with DNA.

The protein resides in the cytoplasm. Functionally, participates in chromosomal partition during cell division. May act via the formation of a condensin-like complex containing Smc and ScpB that pull DNA away from mid-cell into both cell halves. In Streptococcus pneumoniae serotype 4 (strain ATCC BAA-334 / TIGR4), this protein is Segregation and condensation protein A.